A 151-amino-acid polypeptide reads, in one-letter code: Transcriptional repressor NrdR (151 aa).

Residues 3-34 (CPHCGNCDDKVMESRTLAQGDCIRRRRECLAC) fold into a zinc finger. In terms of domain architecture, ATP-cone spans 49–141 (FMVIKKDGRR…VYKQFSNLDE (93 aa)).

The protein belongs to the NrdR family. It depends on Zn(2+) as a cofactor.

Functionally, negatively regulates transcription of bacterial ribonucleotide reductase nrd genes and operons by binding to NrdR-boxes. The chain is Transcriptional repressor NrdR from Treponema denticola (strain ATCC 35405 / DSM 14222 / CIP 103919 / JCM 8153 / KCTC 15104).